A 176-amino-acid chain; its full sequence is Isopentenyl-diphosphate Delta-isomerase (176 aa).

Mn(2+)-binding residues include His-22 and His-28. The Nudix hydrolase domain maps to Leu-26–Ile-160. The active site involves Cys-62. Position 64 (His-64) interacts with Mn(2+). Glu-82 is a Mg(2+) binding site. Mn(2+)-binding residues include Glu-108 and Glu-110. Glu-110 is a catalytic residue.

The protein belongs to the IPP isomerase type 1 family. Requires Mg(2+) as cofactor. Mn(2+) is required as a cofactor.

The protein resides in the cytoplasm. The enzyme catalyses isopentenyl diphosphate = dimethylallyl diphosphate. Its pathway is isoprenoid biosynthesis; dimethylallyl diphosphate biosynthesis; dimethylallyl diphosphate from isopentenyl diphosphate: step 1/1. It participates in porphyrin-containing compound metabolism; chlorophyll biosynthesis. Its function is as follows. Catalyzes the 1,3-allylic rearrangement of the homoallylic substrate isopentenyl (IPP) to its highly electrophilic allylic isomer, dimethylallyl diphosphate (DMAPP). In Roseobacter denitrificans (strain ATCC 33942 / OCh 114) (Erythrobacter sp. (strain OCh 114)), this protein is Isopentenyl-diphosphate Delta-isomerase.